We begin with the raw amino-acid sequence, 494 residues long: UDP-N-acetylmuramoyl-L-alanyl-D-glutamate--L-lysine ligase (494 aa).

Position 30 (Ser30) interacts with UDP-N-acetyl-alpha-D-muramoyl-L-alanyl-D-glutamate. An ATP-binding site is contributed by 110–116; that stretch reads GTNGKTS. UDP-N-acetyl-alpha-D-muramoyl-L-alanyl-D-glutamate is bound by residues 152 to 153, Ser179, and Arg187; that span reads TT. Lys219 is modified (N6-carboxylysine). An L-lysine recognition motif motif is present at residues 406–409; it reads DNPA.

Belongs to the MurCDEF family. MurE subfamily. Post-translationally, carboxylation is probably crucial for Mg(2+) binding and, consequently, for the gamma-phosphate positioning of ATP.

The protein localises to the cytoplasm. It catalyses the reaction UDP-N-acetyl-alpha-D-muramoyl-L-alanyl-D-glutamate + L-lysine + ATP = UDP-N-acetyl-alpha-D-muramoyl-L-alanyl-gamma-D-glutamyl-L-lysine + ADP + phosphate + H(+). Its pathway is cell wall biogenesis; peptidoglycan biosynthesis. Catalyzes the addition of L-lysine to the nucleotide precursor UDP-N-acetylmuramoyl-L-alanyl-D-glutamate (UMAG) in the biosynthesis of bacterial cell-wall peptidoglycan. The polypeptide is UDP-N-acetylmuramoyl-L-alanyl-D-glutamate--L-lysine ligase (Staphylococcus aureus (strain MW2)).